We begin with the raw amino-acid sequence, 1134 residues long: Spermatogenesis-associated protein 31C2 (1134 aa).

The chain crosses the membrane as a helical span at residues 23–43; it reads PWVLDIFLTLVFALGFFFLLL. Disordered stretches follow at residues 54-87, 115-243, 477-504, 524-561, 727-807, 928-1007, and 1111-1134; these read PPSPSPKKRKRHLVSQRPAGRRGRPRGRMKNHSL, LEKG…LLTP, PGTSQAKGKPRPWQSSTSTGESSKEAQT, TPQNLSRGMESFPGKVLGATSEESERNLRKPLRSDSGS, MPER…PTVP, NMGH…PSIS, and AASSQQATLKNQSRPNRDRQIRDQ. The segment covering 59-87 has biased composition (basic residues); that stretch reads PKKRKRHLVSQRPAGRRGRPRGRMKNHSL. The segment covering 132 to 148 has biased composition (basic and acidic residues); that stretch reads VGKRTPDGASRSSHEPT. Low complexity predominate over residues 185–201; it reads SSLSASQPPEPSLLLEH. Positions 204-235 are enriched in pro residues; sequence PEPPALFPHPPRTPDPLACSPPPPKGFTPPPL. Positions 489 to 504 are enriched in polar residues; it reads WQSSTSTGESSKEAQT. Composition is skewed to polar residues over residues 773 to 794 and 937 to 948; these read LTYSLTGSTQQSRSLGAQSSRA and PNCQGSCKSQSP. The span at 954–970 shows a compositional bias: basic and acidic residues; that stretch reads HKRENSRKPNLEKHEEM. The segment covering 1111–1124 has biased composition (polar residues); the sequence is AASSQQATLKNQSR. Residues 1125-1134 are compositionally biased toward basic and acidic residues; it reads PNRDRQIRDQ.

This sequence belongs to the SPATA31 family.

The protein resides in the membrane. May play a role in spermatogenesis. The sequence is that of Spermatogenesis-associated protein 31C2 (SPATA31C2) from Homo sapiens (Human).